The primary structure comprises 593 residues: Protein GAMETE EXPRESSED 1 (593 aa).

Residues methionine 1–cysteine 24 form the signal peptide. Residues histidine 25–arginine 427 lie on the Extracellular side of the membrane. 2 coiled-coil regions span residues cysteine 156–aspartate 194 and glutamate 350–leucine 387. The chain crosses the membrane as a helical span at residues valine 428–threonine 448. Topologically, residues lysine 449–arginine 457 are cytoplasmic. Residues leucine 458–valine 476 traverse the membrane as a helical segment. Residues asparagine 477–methionine 485 are Extracellular-facing. Residues isoleucine 486–leucine 506 form a helical membrane-spanning segment. At serine 507–arginine 593 the chain is on the cytoplasmic side.

As to quaternary structure, homodimer. In terms of tissue distribution, in tricellular pollen, expressed in mature sperm cells. Not expressed in bicellular or unicellular pollen. Detected in ovules, roots and guard cells. Expressed in the embryo sac before cellularization, in the egg cell after cellularization, in the zygote/embryo immediately after fertilization and in the pollen vegetative cell.

Its subcellular location is the cell membrane. Has a dual function during gametophyte development and early embryogenesis. Required for correct pollen maturation. This Arabidopsis thaliana (Mouse-ear cress) protein is Protein GAMETE EXPRESSED 1 (GEX1).